The following is a 203-amino-acid chain: MALVNAEKPEVGSSPSSLGPRNKSWVLLMLRFVAFLATAAATIVMAANRETKTFVVATIGSTPIKATVTAKFQHTPAFVFFVIANGMGSIHNLVMIAGDTFVRKFDYKGLRWVTVAILDMLTAALISGGVNAAVFMAELGKNGNSHAKWNKICDRFGSFCDHGGAAIIASFIGLLLMLVISIISIIKLLKPKSPLVDSHVLAP.

Residues 1–24 (MALVNAEKPEVGSSPSSLGPRNKS) are Cytoplasmic-facing. Residues 25–45 (WVLLMLRFVAFLATAAATIVM) form a helical membrane-spanning segment. The Extracellular segment spans residues 46-76 (AANRETKTFVVATIGSTPIKATVTAKFQHTP). The helical transmembrane segment at 77 to 97 (AFVFFVIANGMGSIHNLVMIA) threads the bilayer. At 98 to 114 (GDTFVRKFDYKGLRWVT) the chain is on the cytoplasmic side. Residues 115–135 (VAILDMLTAALISGGVNAAVF) form a helical membrane-spanning segment. The Extracellular portion of the chain corresponds to 136-165 (MAELGKNGNSHAKWNKICDRFGSFCDHGGA). The helical transmembrane segment at 166-186 (AIIASFIGLLLMLVISIISII) threads the bilayer. At 187–203 (KLLKPKSPLVDSHVLAP) the chain is on the cytoplasmic side.

This sequence belongs to the Casparian strip membrane proteins (CASP) family. In terms of assembly, homodimer and heterodimers.

Its subcellular location is the cell membrane. The chain is CASP-like protein 1B1 from Ricinus communis (Castor bean).